A 394-amino-acid polypeptide reads, in one-letter code: MHIRSLELRDYRSWPELKVDLEPGITVFIGRNGFGKTNIVEAIGYLAHLSSHRVSSDAPLVRAHAENARVSAVAVNQGRELAAHLLIKPHAANQASLNRTKVRTPRELLGVVKTVLFAPEDLALVKGEPAERRRYLDDIIATRQPRMAGVKADYDKVLKQRNALLKTATIALRRGYGTEEGAAALSTLDTWDGQLARLGAEVMAARFALLNELGPKIYEAYTTIAPESRPAAVNYKTTIDQGLSQFSEFDAGIIEATLLTELAAKRQREIERGSSLVGPHRDDVDLMLGDQPAKGFASHGETWSFALSLRIAEFNLLKSDDTDPILILDDVFSELDAGRRQKLVGIAQEVEQVLITAAVHDDLPENLKKVLTAQHTVTVQDTDTGRISLLDVQP.

30 to 37 (GRNGFGKT) is an ATP binding site.

Belongs to the RecF family.

It is found in the cytoplasm. Its function is as follows. The RecF protein is involved in DNA metabolism; it is required for DNA replication and normal SOS inducibility. RecF binds preferentially to single-stranded, linear DNA. It also seems to bind ATP. The polypeptide is DNA replication and repair protein RecF (Corynebacterium glutamicum (strain R)).